The following is a 340-amino-acid chain: GTPase Obg (340 aa).

The Obg domain maps to 1–158; that stretch reads MSFIDEAKVY…KWIILKLKII (158 aa). The OBG-type G domain maps to 159 to 325; sequence SDVGIIGLPN…LSILIKHINK (167 aa). GTP-binding positions include 165-172, 190-194, 211-214, 278-281, and 306-308; these read GLPNAGKS, FTTLE, DIPG, NKCD, and SSI. Residues Ser172 and Thr192 each contribute to the Mg(2+) site.

This sequence belongs to the TRAFAC class OBG-HflX-like GTPase superfamily. OBG GTPase family. As to quaternary structure, monomer. Requires Mg(2+) as cofactor.

The protein resides in the cytoplasm. Functionally, an essential GTPase which binds GTP, GDP and possibly (p)ppGpp with moderate affinity, with high nucleotide exchange rates and a fairly low GTP hydrolysis rate. Plays a role in control of the cell cycle, stress response, ribosome biogenesis and in those bacteria that undergo differentiation, in morphogenesis control. This chain is GTPase Obg, found in Ehrlichia ruminantium (strain Gardel).